Consider the following 221-residue polypeptide: MEDSYLHKGLRRKLIKILRDKGIQDELVLQAIDRVPRHIFLDNAFLEHAYQDKAFPIGDGQTISQPYTVASQTSLLKLSPGMKVLEIGTGSGYQCSVLLEMGVNVFTIEYHKSLFEKSKKMLQSLGYKAQFFCGDGSEGLARFGPYDRILATAGAPYVPQKLLEQLKVGGILVIPVGDQKTQKMLRLTKVTEKEITQEECGDFRFVPLVGKDGWNAKTNKL.

The active site involves S64.

It belongs to the methyltransferase superfamily. L-isoaspartyl/D-aspartyl protein methyltransferase family.

Its subcellular location is the cytoplasm. It carries out the reaction [protein]-L-isoaspartate + S-adenosyl-L-methionine = [protein]-L-isoaspartate alpha-methyl ester + S-adenosyl-L-homocysteine. Functionally, catalyzes the methyl esterification of L-isoaspartyl residues in peptides and proteins that result from spontaneous decomposition of normal L-aspartyl and L-asparaginyl residues. It plays a role in the repair and/or degradation of damaged proteins. The protein is Protein-L-isoaspartate O-methyltransferase of Cytophaga hutchinsonii (strain ATCC 33406 / DSM 1761 / CIP 103989 / NBRC 15051 / NCIMB 9469 / D465).